Reading from the N-terminus, the 379-residue chain is Sensor histidine kinase YhcY (379 aa).

Positions 185 to 373 constitute a Histidine kinase domain; that stretch reads RLAQELHDSV…KLSIRLPLKS (189 aa). H191 is subject to Phosphohistidine; by autocatalysis.

It catalyses the reaction ATP + protein L-histidine = ADP + protein N-phospho-L-histidine.. Member of the two-component regulatory system YhcY/YhcZ. Probably activates YhcZ by phosphorylation. The chain is Sensor histidine kinase YhcY (yhcY) from Bacillus subtilis (strain 168).